A 211-amino-acid chain; its full sequence is Protein-L-isoaspartate O-methyltransferase (211 aa).

Ser-62 is a catalytic residue.

Belongs to the methyltransferase superfamily. L-isoaspartyl/D-aspartyl protein methyltransferase family.

The protein resides in the cytoplasm. It catalyses the reaction [protein]-L-isoaspartate + S-adenosyl-L-methionine = [protein]-L-isoaspartate alpha-methyl ester + S-adenosyl-L-homocysteine. Its function is as follows. Catalyzes the methyl esterification of L-isoaspartyl residues in peptides and proteins that result from spontaneous decomposition of normal L-aspartyl and L-asparaginyl residues. It plays a role in the repair and/or degradation of damaged proteins. The protein is Protein-L-isoaspartate O-methyltransferase of Shewanella putrefaciens (strain CN-32 / ATCC BAA-453).